A 380-amino-acid polypeptide reads, in one-letter code: Cytochrome b (380 aa).

Helical transmembrane passes span 34–54 (FGSLLGICLMTQILTGLLLAM), 78–99 (WLIRNLHANGASLFFICIYLHI), 114–134 (WNTGIILLLTLMATAFVGYVL), and 179–199 (FFALHFLLPFLIAGLTLIHLT). 2 residues coordinate heme b: H84 and H98. Heme b is bound by residues H183 and H197. A ubiquinone is bound at residue H202. Helical transmembrane passes span 227–247 (SKDILGFMLLYFLLTTLALLS), 289–309 (LGGVLALAASILILFLSPFLH), 321–341 (LSQALFWLLVTNLFILTWIGS), and 348–368 (FIIIGQLASLSYFTILLILLP).

It belongs to the cytochrome b family. In terms of assembly, the cytochrome bc1 complex contains 11 subunits: 3 respiratory subunits (MT-CYB, CYC1 and UQCRFS1), 2 core proteins (UQCRC1 and UQCRC2) and 6 low-molecular weight proteins (UQCRH/QCR6, UQCRB/QCR7, UQCRQ/QCR8, UQCR10/QCR9, UQCR11/QCR10 and a cleavage product of UQCRFS1). This cytochrome bc1 complex then forms a dimer. The cofactor is heme b.

Its subcellular location is the mitochondrion inner membrane. Component of the ubiquinol-cytochrome c reductase complex (complex III or cytochrome b-c1 complex) that is part of the mitochondrial respiratory chain. The b-c1 complex mediates electron transfer from ubiquinol to cytochrome c. Contributes to the generation of a proton gradient across the mitochondrial membrane that is then used for ATP synthesis. This is Cytochrome b (MT-CYB) from Phalcoboenus australis (Striated caracara).